We begin with the raw amino-acid sequence, 539 residues long: Protein PNS1 (539 aa).

Residues 1-38 are disordered; it reads MPLNEKYERPPQPPPAYDPNHRPPSSSENSAAANVNDG. Topologically, residues 1–81 are cytoplasmic; the sequence is MPLNEKYERP…NDNKPRWNDW (81 aa). Positions 25–36 are enriched in low complexity; the sequence is SSSENSAAANVN. Residues 82–102 traverse the membrane as a helical segment; that stretch reads PFTIFFLCTVGGFIAIAAITL. The Extracellular segment spans residues 103 to 129; the sequence is RAWSQTYSSTGSGIYDGVNTGTLNTNA. Residues 130-150 form a helical membrane-spanning segment; the sequence is AILLVFVCIIALVFSVLGLTL. The Cytoplasmic portion of the chain corresponds to 151–157; the sequence is CRIFPKQ. The chain crosses the membrane as a helical span at residues 158–178; sequence FIYCGMVINLVASLGTAIMYM. Over 179-182 the chain is Extracellular; sequence SLRY. A helical transmembrane segment spans residues 183 to 203; it reads WSAGIVFLVFTFMTAWCYWGM. Residues 204-226 are Cytoplasmic-facing; the sequence is RSRIPLSVAVLKVVVDAMKKCPQ. The chain crosses the membrane as a helical span at residues 227–247; that stretch reads IFFVSFVGALVASAFGFLFSA. The Extracellular portion of the chain corresponds to 248-274; sequence VIVATYIKYDPNSSNGGCDVSGGSCSH. Residue asparagine 259 is glycosylated (N-linked (GlcNAc...) asparagine). Residues 275–295 traverse the membrane as a helical segment; sequence SKLIGVLVVVFFCGYYISEVI. At 296–332 the chain is on the cytoplasmic side; the sequence is RNVIHCVISGVFGSWYYMSKSDQGMPRWPAFGALKRA. A helical transmembrane segment spans residues 333 to 353; that stretch reads MTYSFGSICFGSLLVALIDLL. Residues 354-371 lie on the Extracellular side of the membrane; it reads RQILQMIRHDVTSSGGGQ. A helical membrane pass occupies residues 372–392; the sequence is IAIQILFMVFDWIIGFLKWLA. At 393–436 the chain is on the cytoplasmic side; the sequence is EYFNHYAYSFIALYGKPYLRAAKETWYMLREKGMDALINDNLIN. A helical transmembrane segment spans residues 437 to 457; that stretch reads IALGLFSMFASYMTALFTFLY. Residues 458–473 are Extracellular-facing; it reads LRFTSPQYNSNGAYNG. The helical transmembrane segment at 474–494 threads the bilayer; the sequence is ALMAFSFVIALQICNIATEAI. The Cytoplasmic segment spans residues 495 to 539; it reads RSGTATFFVALGNDPEVFHHSYPHRFDEIFRAYPDVLRKLSHQNV.

This sequence belongs to the CTL (choline transporter-like) family.

It localises to the cell membrane. Functionally, probably involved in transport through the plasma membrane. The polypeptide is Protein PNS1 (PNS1) (Saccharomyces cerevisiae (strain ATCC 204508 / S288c) (Baker's yeast)).